The chain runs to 201 residues: Ras-related protein Rab-9A (201 aa).

A2 is modified (N-acetylalanine). G17 provides a ligand contact to GDP. GTP contacts are provided by G17, V18, G19, K20, S21, S22, T34, H38, and T39. Positions 19, 20, 21, and 22 each coordinate GDP. S21 provides a ligand contact to Mg(2+). Positions K31 to V42 match the Switch 1 motif. Mg(2+)-binding residues include T39 and D62. The Switch 2 motif lies at A64–R78. Residues G65, N124, K125, and D127 each contribute to the GTP site. The GDP site is built by N124, K125, D127, A155, and K156. K156 contacts GTP. Position 179 is a phosphoserine (S179). Residue T187 is modified to Phosphothreonine. Residues C200 and C201 are each lipidated (S-geranylgeranyl cysteine).

The protein belongs to the small GTPase superfamily. Rab family. Interacts (preferentially in its GTP-bound form) with GCC2 (via its GRIP domain). Interacts (GTP-bound form) with SGSM1; the GDP-bound form has much lower affinity for SGSM1. Interacts with SGSM2. The GTP-bound form but not the GDP-bound form interacts with HPS4 and the BLOC-3 complex (heterodimer of HPS1 and HPS4) but does not interact with HPS1 alone. Interacts (GTP-bound form) with NDE1; two RAB9A-GTP molecules lie on the opposite sides of the NDE1 homodimer; the interaction leads to RAB9A-dynein motor tethering. Interacts (GTP-bound form) with NDEL1. Mg(2+) is required as a cofactor.

It localises to the cell membrane. The protein localises to the endoplasmic reticulum membrane. It is found in the golgi apparatus membrane. Its subcellular location is the late endosome. The protein resides in the cytoplasmic vesicle. It localises to the phagosome membrane. The protein localises to the phagosome. It is found in the cytoplasmic vesicle membrane. Its subcellular location is the melanosome. It carries out the reaction GTP + H2O = GDP + phosphate + H(+). With respect to regulation, regulated by guanine nucleotide exchange factors (GEFs) which promote the exchange of bound GDP for free GTP. Regulated by GTPase activating proteins (GAPs) which increase the GTP hydrolysis activity. Inhibited by GDP dissociation inhibitors (GDIs). Functionally, the small GTPases Rab are key regulators of intracellular membrane trafficking, from the formation of transport vesicles to their fusion with membranes. Rabs cycle between an inactive GDP-bound form and an active GTP-bound form that is able to recruit to membranes different sets of downstream effectors directly responsible for vesicle formation, movement, tethering and fusion. RAB9A is involved in the transport of proteins between the endosomes and the trans-Golgi network (TGN). Specifically uses NDE1/NDEL1 as an effector to interact with the dynein motor complex in order to control retrograde trafficking of RAB9-associated late endosomes to the TGN. Involved in the recruitment of SGSM2 to melanosomes and is required for the proper trafficking of melanogenic enzymes TYR, TYRP1 and DCT/TYRP2 to melanosomes in melanocytes. The sequence is that of Ras-related protein Rab-9A (RAB9A) from Canis lupus familiaris (Dog).